The primary structure comprises 354 residues: UDP-galactose transporter homolog 1 (354 aa).

5 helical membrane passes run 6–26, 54–74, 95–112, 123–143, and 148–168; these read GGSI…FLTW, LVIN…YSVV, FFKS…SSPL, LAYL…HFVL, and FPLY…IFTL. The N-linked (GlcNAc...) asparagine glycan is linked to Asn-202. 4 helical membrane passes run 227 to 247, 268 to 288, 295 to 317, and 321 to 340; these read YLMC…ALIF, MNIL…FIIL, ILIT…LFGH, and GLQW…EALV.

Belongs to the nucleotide-sugar transporter family. SLC35B subfamily.

The protein resides in the endoplasmic reticulum membrane. Its function is as follows. May be involved in specific transport of UDP-Gal from the cytosol to the Golgi lumen. Involved in the maintenance of optimal conditions for the folding of secretory pathway proteins in the endoplasmic reticulum. The polypeptide is UDP-galactose transporter homolog 1 (HUT1) (Debaryomyces hansenii (strain ATCC 36239 / CBS 767 / BCRC 21394 / JCM 1990 / NBRC 0083 / IGC 2968) (Yeast)).